We begin with the raw amino-acid sequence, 733 residues long: Putative cyclic nucleotide-gated ion channel 9 (733 aa).

The Cytoplasmic portion of the chain corresponds to 1-117; sequence MLDCGKKAVK…DKFLLLCNKL (117 aa). A helical transmembrane segment spans residues 118–138; it reads FVTSCILAVSVDPLFLYLPFV. Topologically, residues 139-151 are extracellular; that stretch reads KDNEKCIGIDRKL. A helical transmembrane segment spans residues 152–172; sequence AIIATTLRTVIDAFYLFHMAL. Residues 173–207 lie on the Cytoplasmic side of the membrane; that stretch reads RFRTAFVAPSSRVFGRGELVIDPAQIAKRYLQQYF. Residues 208–228 traverse the membrane as a helical segment; sequence IIDFLSVLPLPQIVVWRFLYI. Residues 229-239 are Extracellular-facing; the sequence is SKGASVLATKR. Residues 240–260 form a helical membrane-spanning segment; that stretch reads ALRSIILVQYIPRFIRLYPLS. Residues 261 to 280 are Cytoplasmic-facing; sequence SELKRTAGVFAETAWAGAAY. A helical membrane pass occupies residues 281–301; it reads YLLLYMLASHIVGAIWYLLAL. Residues 302-406 are Extracellular-facing; sequence ERYNGCWTKV…GQGLETSTYP (105 aa). A helical membrane pass occupies residues 407 to 427; it reads GEVIFSIALAIAGLLLFALLI. Over 428–733 the chain is Cytoplasmic; the sequence is GNMQTYLQSL…EPDFSADDTS (306 aa). A nucleoside 3',5'-cyclic phosphate-binding positions include 513 to 637 and Glu-584; that span reads LFEN…SRQV. The tract at residues 629–644 is calmodulin-binding; that stretch reads FRRLHSRQVQHTFRFY. The IQ domain maps to 649–678; that stretch reads RTWAAIFIQAAWRRYVKKKKLEQLRKEEEE.

This sequence belongs to the cyclic nucleotide-gated cation channel (TC 1.A.1.5) family. Homotetramer or heterotetramer.

The protein resides in the cell membrane. Functionally, putative cyclic nucleotide-gated ion channel. The chain is Putative cyclic nucleotide-gated ion channel 9 (CNGC9) from Arabidopsis thaliana (Mouse-ear cress).